A 344-amino-acid polypeptide reads, in one-letter code: Trace amine-associated receptor 8c (344 aa).

Topologically, residues 1–31 are extracellular; it reads MTSNFSQPALQLCYENTNGSCIKTPYSPGPR. 2 N-linked (GlcNAc...) asparagine glycosylation sites follow: Asn-4 and Asn-18. 2 disulfides stabilise this stretch: Cys-21-Cys-185 and Cys-104-Cys-189. Residues 32 to 52 form a helical membrane-spanning segment; the sequence is VILYMVYGFGAVLAVCGNLLV. The Cytoplasmic portion of the chain corresponds to 53 to 67; sequence VISVLHFKQLHSPAN. The chain crosses the membrane as a helical span at residues 68-88; sequence FLIASLASADFLVGISVMPFS. Residues 89–111 are Extracellular-facing; the sequence is MVRSIESCWYFGDAFCSLHSCCD. Residues 112 to 132 form a helical membrane-spanning segment; sequence VAFCYSSALHLCFISVDRYIA. The Cytoplasmic segment spans residues 133 to 146; the sequence is VTDPLVYPTKFTVS. Residues 147–167 traverse the membrane as a helical segment; sequence VSGICISISWILPLVYSSAVF. Residues 168-195 lie on the Extracellular side of the membrane; the sequence is YTGISAKGIESLVSALNCVGGCQVVVNQ. A helical transmembrane segment spans residues 196 to 216; that stretch reads DWVLISFLLFFIPTVVMIILY. Residues 217–260 are Cytoplasmic-facing; that stretch reads SKIFLVAKQQAVKIETSVSGNRGESSSESHKARVAKRERKAAKT. Residues 261 to 281 form a helical membrane-spanning segment; that stretch reads LGVTVVAFMVSWLPYTIDALV. Position 282 (Asp-282) is a topological domain, extracellular. The helical transmembrane segment at 283 to 303 threads the bilayer; the sequence is AFMGFITPAYVYEICCWSAYY. The Cytoplasmic portion of the chain corresponds to 304-344; it reads NSAMNPLIYAFFYPWFRKAIKLILSGKILKGHSSTTNLFSE.

The protein belongs to the G-protein coupled receptor 1 family. As to expression, specifically expressed in neurons of the olfactory epithelium.

The protein resides in the cell membrane. Its function is as follows. Olfactory receptor specific for trace amines, such ascyclohexylamine (1-MPD). Trace amine compounds are enriched in animal body fluids and act on trace amine-associated receptors (TAARs) to elicit both intraspecific and interspecific innate behaviors. Ligand-binding causes a conformation change that triggers signaling via G(s)-class of G alpha proteins (GNAL or GNAS). In Mus musculus (Mouse), this protein is Trace amine-associated receptor 8c.